The following is a 428-amino-acid chain: L-gulono-1,4-lactone dehydrogenase (428 aa).

The region spanning 12-179 is the FAD-binding PCMH-type domain; it reads QVCAPSAIVR…SQVTLQTVPL (168 aa).

Belongs to the oxygen-dependent FAD-linked oxidoreductase family. The cofactor is a divalent metal cation.

It carries out the reaction L-gulono-1,4-lactone + 2 Fe(III)-[cytochrome c] = L-ascorbate + 2 Fe(II)-[cytochrome c] + 3 H(+). It participates in cofactor biosynthesis; L-ascorbate biosynthesis. Oxidizes L-gulono-1,4-lactone to L-xylo-hexulonolactone which spontaneously isomerizes to L-ascorbate. The sequence is that of L-gulono-1,4-lactone dehydrogenase from Mycobacterium tuberculosis (strain CDC 1551 / Oshkosh).